A 208-amino-acid polypeptide reads, in one-letter code: Small ribosomal subunit protein uS4 (208 aa).

Residues 98–158 (RRLDNVVYRL…EKSRGQLRIK (61 aa)) form the S4 RNA-binding domain.

Belongs to the universal ribosomal protein uS4 family. As to quaternary structure, part of the 30S ribosomal subunit. Contacts protein S5. The interaction surface between S4 and S5 is involved in control of translational fidelity.

Its function is as follows. One of the primary rRNA binding proteins, it binds directly to 16S rRNA where it nucleates assembly of the body of the 30S subunit. Functionally, with S5 and S12 plays an important role in translational accuracy. The polypeptide is Small ribosomal subunit protein uS4 (Magnetococcus marinus (strain ATCC BAA-1437 / JCM 17883 / MC-1)).